A 95-amino-acid polypeptide reads, in one-letter code: Ubiquinol-cytochrome-c reductase complex assembly factor 3 (95 aa).

At 1 to 7 the chain is on the mitochondrial matrix side; the sequence is MTTLRKL. A helical transmembrane segment spans residues 8–28; it reads LLVGALLGAGAGVGTALFALV. The segment at 23–80 is mediates lipid-binding; it reads ALFALVTPGEERKQAMLKEMPEQYPQRRDEAARTKELLLATLQEAAATQENVAWRKNW. Residues 29–95 lie on the Mitochondrial intermembrane side of the membrane; the sequence is TPGEERKQAM…GGGGGGGRSA (67 aa).

This sequence belongs to the UQCC3 family. As to quaternary structure, associates with the ubiquinol-cytochrome c reductase complex (mitochondrial respiratory chain complex III(CIII) or cytochrome b-c1 complex). Interacts with UQCC1. Forms a complex, named COMC, composed of UQCC1, UQCC2; UQCC3 and UQCC4; mediates MT-CYB hemylation and association with the first nuclear-encoded complex III subunit UQCRQ. Post-translationally, probably cleaved by OMA1 under mitochondrial stress conditions.

It is found in the mitochondrion inner membrane. Required for the assembly of the ubiquinol-cytochrome c reductase complex (mitochondrial respiratory chain complex III or cytochrome b-c1 complex), mediating cytochrome b recruitment and probably stabilization within the complex. Thereby, plays an important role in ATP production by mitochondria. Cardiolipin-binding protein, it may also control the cardiolipin composition of mitochondria membranes and their morphology. The chain is Ubiquinol-cytochrome-c reductase complex assembly factor 3 from Bos taurus (Bovine).